A 231-amino-acid polypeptide reads, in one-letter code: Uracil phosphoribosyltransferase (231 aa).

38–42 (KGLVR) is a GTP binding site. Residues Arg-87, Arg-112, and 140–148 (DPMIATGST) each bind 5-phospho-alpha-D-ribose 1-diphosphate. Uracil contacts are provided by residues Ile-203 and 208-210 (GDA). Asp-209 serves as a coordination point for 5-phospho-alpha-D-ribose 1-diphosphate.

This sequence belongs to the UPRTase family. The cofactor is Mg(2+).

The catalysed reaction is UMP + diphosphate = 5-phospho-alpha-D-ribose 1-diphosphate + uracil. Its pathway is pyrimidine metabolism; UMP biosynthesis via salvage pathway; UMP from uracil: step 1/1. Allosterically activated by GTP. Functionally, catalyzes the conversion of uracil and 5-phospho-alpha-D-ribose 1-diphosphate (PRPP) to UMP and diphosphate. The sequence is that of Uracil phosphoribosyltransferase from Methanococcus maripaludis (strain C7 / ATCC BAA-1331).